The following is a 357-amino-acid chain: IGF-like family receptor 1 (357 aa).

Positions 1 to 22 (MGPLRLLPTAVLLLAQAAPWEA) are cleaved as a signal peptide. Residues 23 to 160 (SQHCGRLEYW…HKAPQQAWPS (138 aa)) are Extracellular-facing. Residues 100 to 147 (IPSGSRGGTGRPCREPVPNKEPCPLTPGKSSILSSQEPSSPGIPSVSW) are disordered. Residues 129 to 139 (SSILSSQEPSS) show a composition bias toward low complexity. Residues 161–181 (LSFALFLVLVLLVTSAIILLA) form a helical membrane-spanning segment. Residues 182-357 (LQRHHRRLDQ…KLGSSGACLA (176 aa)) lie on the Cytoplasmic side of the membrane.

It localises to the cell membrane. Functionally, probable cell membrane receptor for the IGF-like family protein IGFL. This Bos taurus (Bovine) protein is IGF-like family receptor 1 (IGFLR1).